The following is a 146-amino-acid chain: Large ribosomal subunit protein uL15 (146 aa).

Residues 1-54 (MTLRLNELAPAEGAKREHRRLGRGIGSGVGKTGGRGIKGQKSRKSGGVRPGFEG) form a disordered region. A compositionally biased stretch (gly residues) spans 23–37 (RGIGSGVGKTGGRGI).

It belongs to the universal ribosomal protein uL15 family. As to quaternary structure, part of the 50S ribosomal subunit.

Its function is as follows. Binds to the 23S rRNA. This chain is Large ribosomal subunit protein uL15, found in Acinetobacter baumannii (strain SDF).